A 288-amino-acid polypeptide reads, in one-letter code: Elongation factor Ts (288 aa).

The tract at residues 79 to 82 (TDFV) is involved in Mg(2+) ion dislocation from EF-Tu.

This sequence belongs to the EF-Ts family.

The protein localises to the cytoplasm. In terms of biological role, associates with the EF-Tu.GDP complex and induces the exchange of GDP to GTP. It remains bound to the aminoacyl-tRNA.EF-Tu.GTP complex up to the GTP hydrolysis stage on the ribosome. The protein is Elongation factor Ts of Ehrlichia canis (strain Jake).